Consider the following 820-residue polypeptide: Disintegrin and metalloproteinase domain-containing protein 29 (820 aa).

An N-terminal signal peptide occupies residues 1–18; that stretch reads MKMLLLLHCLGVFLSCSG. Residues 19–193 constitute a propeptide that is removed on maturation; that stretch reads HIQDEHPQYH…TQKQSSYVGW (175 aa). Residues 194–674 lie on the Extracellular side of the membrane; the sequence is WIHFRIVEIV…GPPPKRKKKK (481 aa). The region spanning 198–390 is the Peptidase M12B domain; that stretch reads RIVEIVVVID…RTKCLLETVH (193 aa). Asn217 and Asn320 each carry an N-linked (GlcNAc...) asparagine glycan. 3 disulfides stabilise this stretch: Cys307-Cys384, Cys347-Cys369, and Cys349-Cys354. N-linked (GlcNAc...) asparagine glycosylation is found at Asn368, Asn428, Asn469, Asn538, Asn545, Asn558, and Asn564. A Disintegrin domain is found at 397 to 483; sequence VKRCGNGVVE…KCPDDFYVED (87 aa). The cysteines at positions 455 and 475 are disulfide-linked. 3 disulfide bridges follow: Cys625-Cys636, Cys630-Cys642, and Cys644-Cys653. The 30-residue stretch at 625–654 folds into the EGF-like domain; the sequence is CSPAFCNKRGICNNKHHCHCNYLWDPPNCL. A helical transmembrane segment spans residues 675–695; that stretch reads KFCYLCILLLIVLFILLCCLY. Residues 696–820 are Cytoplasmic-facing; sequence RLCKKSKPIK…SQSQPPVTPS (125 aa). The segment at 706-820 is disordered; it reads KQQDVQTPSA…SQSQPPVTPS (115 aa). A compositionally biased stretch (basic and acidic residues) spans 715–727; it reads AKEEEKIQRRPHE. Low complexity predominate over residues 738–820; that stretch reads PSQSQPPVTP…SQSQPPVTPS (83 aa). 9 repeat units span residues 739-747, 748-756, 757-765, 766-774, 775-783, 784-792, 793-801, 802-810, and 811-819. The 9 X 9 AA approximate repeats stretch occupies residues 739 to 819; sequence SQSQPPVTPS…PSQSQPPVTP (81 aa).

As to expression, expressed specifically in testes.

The protein resides in the membrane. May be involved in spermatogenesis and fertilization. Seems to be a non catalytic metalloprotease-like protein. The protein is Disintegrin and metalloproteinase domain-containing protein 29 (ADAM29) of Homo sapiens (Human).